Here is a 680-residue protein sequence, read N- to C-terminus: DNA-directed RNA polymerase subunit beta' (680 aa).

Positions 69, 71, 87, and 90 each coordinate Zn(2+). Mg(2+) contacts are provided by Asp489, Asp491, and Asp493.

The protein belongs to the RNA polymerase beta' chain family. RpoC1 subfamily. As to quaternary structure, in plastids the minimal PEP RNA polymerase catalytic core is composed of four subunits: alpha, beta, beta', and beta''. When a (nuclear-encoded) sigma factor is associated with the core the holoenzyme is formed, which can initiate transcription. It depends on Mg(2+) as a cofactor. Requires Zn(2+) as cofactor.

The protein localises to the plastid. The protein resides in the chloroplast. The catalysed reaction is RNA(n) + a ribonucleoside 5'-triphosphate = RNA(n+1) + diphosphate. DNA-dependent RNA polymerase catalyzes the transcription of DNA into RNA using the four ribonucleoside triphosphates as substrates. The polypeptide is DNA-directed RNA polymerase subunit beta' (Lobularia maritima (Sweet alyssum)).